Reading from the N-terminus, the 470-residue chain is MTLPRHLCLLPLSLSLLACSTPTPPTMGIAPPAGWQSPTASKAQALPDQRWWKAFASPELDQLIEIARNNSHDLAAAAARVRQAQARAVIAGAPLLPEVQFGLDASRQRLLRGEGNDQLDASSSERTSTSFDANLSASYEIDFWGGLRSARDSALRSLDASRLDRQTVKLTLFGSVADTYLQSLALKEQLRIAQLNLRNAQAVLSLVEARQQSGSSTQLELAQQRSLVAAQQRQLPLLEQQWQDTQVTLATLLGLPVQQLPTSTAAFADLRWPRIASGVPSELLARRPDIAAAEARLAAASANVQVARAALLPKLTLGVEFGSGASTFAQIFDSPYYTLTSGLVAPVFNRGRLRAAQQLAEAEQEELLEAYRTSILAAFADVEKALNATQGVDRQRQWQDQEVEQSRIAFQLAERRYRAGAETLLTVLDTQRSLYQAQDQQARLQLSQLQASVALYKALGGGWQADSPTR.

A signal peptide spans 1–18; that stretch reads MTLPRHLCLLPLSLSLLA. The N-palmitoyl cysteine moiety is linked to residue C19. C19 is lipidated: S-diacylglycerol cysteine.

This sequence belongs to the outer membrane factor (OMF) (TC 1.B.17) family. Part of the tripartite efflux system PvdRT-OpmQ, which is composed of an inner membrane component with both ATPase and permease domains, PvdT, a periplasmic membrane fusion protein, PvdR, and an outer membrane component, OpmQ.

Its subcellular location is the cell outer membrane. Functionally, part of the tripartite efflux system PvdRT-OpmQ required for the secretion into the extracellular milieu of the siderophore pyoverdine (PVD), which is involved in iron acquisition. The system is responsible for export of newly synthesized PVD after the final steps of biosynthesis have taken place in the periplasm. It is also responsible for recycling of PVD after internalization of ferri-PVD into the periplasm by the outer-membrane receptor FpvA and release of iron from PVD, thus making PVD available for new cycles of iron uptake. Contributes to resistance against ampicillin. The protein is Pyoverdine export outer membrane protein OpmQ of Pseudomonas putida (strain ATCC 47054 / DSM 6125 / CFBP 8728 / NCIMB 11950 / KT2440).